The following is a 452-amino-acid chain: Phosphoglucosamine mutase (452 aa).

The active-site Phosphoserine intermediate is the S112. Residues S112, D251, D253, and D255 each coordinate Mg(2+). S112 bears the Phosphoserine mark.

Belongs to the phosphohexose mutase family. Requires Mg(2+) as cofactor. In terms of processing, activated by phosphorylation.

It catalyses the reaction alpha-D-glucosamine 1-phosphate = D-glucosamine 6-phosphate. Its function is as follows. Catalyzes the conversion of glucosamine-6-phosphate to glucosamine-1-phosphate. In Bordetella bronchiseptica (strain ATCC BAA-588 / NCTC 13252 / RB50) (Alcaligenes bronchisepticus), this protein is Phosphoglucosamine mutase.